The sequence spans 130 residues: Small ribosomal subunit protein uS11 (130 aa).

A disordered region spans residues 1-21 (MAPQSKRSGGRKQKKHVPNGV). The segment covering 8–17 (SGGRKQKKHV) has biased composition (basic residues).

This sequence belongs to the universal ribosomal protein uS11 family. In terms of assembly, part of the 30S ribosomal subunit. Interacts with proteins S7 and S18. Binds to IF-3.

In terms of biological role, located on the platform of the 30S subunit, it bridges several disparate RNA helices of the 16S rRNA. Forms part of the Shine-Dalgarno cleft in the 70S ribosome. The polypeptide is Small ribosomal subunit protein uS11 (Acaryochloris marina (strain MBIC 11017)).